The primary structure comprises 263 residues: Troponin T, fast skeletal muscle isoforms (263 aa).

The segment covering 1-26 has biased composition (acidic residues); the sequence is MSDTEEVEHGEEEYEEEAHEAEEVHE. Disordered regions lie at residues 1–66, 107–188, and 243–263; these read MSDT…FDDI, RAER…VLAE, and DQAQ…GRWK. Ser-2 is modified (N-acetylserine). Composition is skewed to basic and acidic residues over residues 56–66, 107–149, and 177–188; these read PEGEKVDFDDI, RAER…DDLK, and TARETKKKVLAE. Over residues 247-263 the composition is skewed to basic residues; that stretch reads KHSKKAGAKGKVGGRWK.

This sequence belongs to the troponin T family.

Functionally, troponin T is the tropomyosin-binding subunit of troponin, the thin filament regulatory complex which confers calcium-sensitivity to striated muscle actomyosin ATPase activity. The sequence is that of Troponin T, fast skeletal muscle isoforms (TNNT3) from Gallus gallus (Chicken).